The chain runs to 435 residues: Succinate--CoA ligase [ADP-forming] subunit beta, mitochondrial (435 aa).

Residues 1–20 (MIGRISQPLLNTSQKFMAPA) constitute a mitochondrion transit peptide. The ATP-grasp domain maps to 32-259 (MKILQNYEIK…SNAEFRQAKL (228 aa)). ATP contacts are provided by residues Lys-69 and 76 to 78 (GRG). 2 residues coordinate Mg(2+): Asn-229 and Asp-243. Substrate is bound by residues Asn-294 and 352–354 (GIM).

Belongs to the succinate/malate CoA ligase beta subunit family. ATP-specific subunit beta subfamily. In terms of assembly, heterodimer of an alpha and a beta subunit. The beta subunit determines specificity for ATP. The cofactor is Mg(2+).

It localises to the mitochondrion. The catalysed reaction is succinate + ATP + CoA = succinyl-CoA + ADP + phosphate. It participates in carbohydrate metabolism; tricarboxylic acid cycle; succinate from succinyl-CoA (ligase route): step 1/1. Functionally, ATP-specific succinyl-CoA synthetase functions in the citric acid cycle (TCA), coupling the hydrolysis of succinyl-CoA to the synthesis of ATP and thus represents the only step of substrate-level phosphorylation in the TCA. The beta subunit provides nucleotide specificity of the enzyme and binds the substrate succinate, while the binding sites for coenzyme A and phosphate are found in the alpha subunit. The chain is Succinate--CoA ligase [ADP-forming] subunit beta, mitochondrial from Caenorhabditis elegans.